The following is a 568-amino-acid chain: 2-succinyl-5-enolpyruvyl-6-hydroxy-3-cyclohexene-1-carboxylate synthase (568 aa).

The protein belongs to the TPP enzyme family. MenD subfamily. In terms of assembly, homodimer. Mg(2+) is required as a cofactor. Mn(2+) serves as cofactor. The cofactor is thiamine diphosphate.

It catalyses the reaction isochorismate + 2-oxoglutarate + H(+) = 5-enolpyruvoyl-6-hydroxy-2-succinyl-cyclohex-3-ene-1-carboxylate + CO2. It participates in quinol/quinone metabolism; 1,4-dihydroxy-2-naphthoate biosynthesis; 1,4-dihydroxy-2-naphthoate from chorismate: step 2/7. The protein operates within quinol/quinone metabolism; menaquinone biosynthesis. In terms of biological role, catalyzes the thiamine diphosphate-dependent decarboxylation of 2-oxoglutarate and the subsequent addition of the resulting succinic semialdehyde-thiamine pyrophosphate anion to isochorismate to yield 2-succinyl-5-enolpyruvyl-6-hydroxy-3-cyclohexene-1-carboxylate (SEPHCHC). This is 2-succinyl-5-enolpyruvyl-6-hydroxy-3-cyclohexene-1-carboxylate synthase from Haemophilus influenzae (strain PittGG).